Consider the following 282-residue polypeptide: MSAIVLDGKAYAKQLEGEMQERVERIRAKTNGEPPILATILVGSDPASATYVRMKGNACRRVGMDSLSVTLPEETTTEELLAKIDELNADERVRGILLQHPVPKQIDERACFDRISIDKDVDGVTTHGFGRMAMDEPAYGSATPAGIMRLLRHYQIPLEGKEAVVVGRSPILGKPMAMMLLAANATVTICHSRTKNLPDVIRRADIIVGALGKPEFIKGDWIRDGAVVVDAGYHPGGVGDIELSAVIGRCAAYTPVPGGVGPMTIATLIAQTVEAAEKAAGI.

NADP(+) contacts are provided by residues 167-169 (GRS) and Ser192.

It belongs to the tetrahydrofolate dehydrogenase/cyclohydrolase family. As to quaternary structure, homodimer.

It carries out the reaction (6R)-5,10-methylene-5,6,7,8-tetrahydrofolate + NADP(+) = (6R)-5,10-methenyltetrahydrofolate + NADPH. The enzyme catalyses (6R)-5,10-methenyltetrahydrofolate + H2O = (6R)-10-formyltetrahydrofolate + H(+). Its pathway is one-carbon metabolism; tetrahydrofolate interconversion. Its function is as follows. Catalyzes the oxidation of 5,10-methylenetetrahydrofolate to 5,10-methenyltetrahydrofolate and then the hydrolysis of 5,10-methenyltetrahydrofolate to 10-formyltetrahydrofolate. This chain is Bifunctional protein FolD, found in Acidobacterium capsulatum (strain ATCC 51196 / DSM 11244 / BCRC 80197 / JCM 7670 / NBRC 15755 / NCIMB 13165 / 161).